The primary structure comprises 98 residues: MDFRVLLVISPIIFAWIFTVFWLGKWDVFRLTPFGLPKRGVAPFENYQVWGDSAVVPNTGRPSEGYPVFTVRTAAVNALGIPTVFFLGAILAMQFKSY.

The next 2 helical transmembrane spans lie at 5-25 (VLLVISPIIFAWIFTVFWLGK) and 73-93 (TAAVNALGIPTVFFLGAILAM).

Belongs to the PsbE/PsbF family.

It localises to the membrane. Its function is as follows. Unknown. Resembles PsbF, one of the subunits of the photosystem II reaction center. However, it encodes asparagine rather than histidine at the site PsbF uses to bind heme. The polypeptide is PsbF-like protein (Prochlorococcus marinus (strain MIT 9312)).